The sequence spans 203 residues: 2-phospho-L-lactate guanylyltransferase (203 aa).

This sequence belongs to the CofC family. Homodimer.

It catalyses the reaction (2S)-2-phospholactate + GTP + H(+) = (2S)-lactyl-2-diphospho-5'-guanosine + diphosphate. It participates in cofactor biosynthesis; coenzyme F420 biosynthesis. Guanylyltransferase that catalyzes the activation of (2S)-2-phospholactate (2-PL) as (2S)-lactyl-2-diphospho-5'-guanosine, via the condensation of 2-PL with GTP. It is involved in the biosynthesis of coenzyme F420, a hydride carrier cofactor. The chain is 2-phospho-L-lactate guanylyltransferase from Halomicrobium mukohataei (strain ATCC 700874 / DSM 12286 / JCM 9738 / NCIMB 13541) (Haloarcula mukohataei).